The primary structure comprises 232 residues: 2-C-methyl-D-erythritol 4-phosphate cytidylyltransferase (232 aa).

This sequence belongs to the IspD/TarI cytidylyltransferase family. IspD subfamily.

The enzyme catalyses 2-C-methyl-D-erythritol 4-phosphate + CTP + H(+) = 4-CDP-2-C-methyl-D-erythritol + diphosphate. Its pathway is isoprenoid biosynthesis; isopentenyl diphosphate biosynthesis via DXP pathway; isopentenyl diphosphate from 1-deoxy-D-xylulose 5-phosphate: step 2/6. Its function is as follows. Catalyzes the formation of 4-diphosphocytidyl-2-C-methyl-D-erythritol from CTP and 2-C-methyl-D-erythritol 4-phosphate (MEP). In Vibrio cholerae serotype O1 (strain ATCC 39315 / El Tor Inaba N16961), this protein is 2-C-methyl-D-erythritol 4-phosphate cytidylyltransferase.